Consider the following 607-residue polypeptide: Elongation factor 4 (607 aa).

Positions 11–193 (EKIRNFSIIA…QIVEKVPAPQ (183 aa)) constitute a tr-type G domain. GTP-binding positions include 23 to 28 (DHGKST) and 140 to 143 (NKID).

This sequence belongs to the TRAFAC class translation factor GTPase superfamily. Classic translation factor GTPase family. LepA subfamily.

It is found in the cell membrane. It catalyses the reaction GTP + H2O = GDP + phosphate + H(+). In terms of biological role, required for accurate and efficient protein synthesis under certain stress conditions. May act as a fidelity factor of the translation reaction, by catalyzing a one-codon backward translocation of tRNAs on improperly translocated ribosomes. Back-translocation proceeds from a post-translocation (POST) complex to a pre-translocation (PRE) complex, thus giving elongation factor G a second chance to translocate the tRNAs correctly. Binds to ribosomes in a GTP-dependent manner. The sequence is that of Elongation factor 4 from Lactococcus lactis subsp. lactis (strain IL1403) (Streptococcus lactis).